A 147-amino-acid chain; its full sequence is MTTATIDSSSGNGPLVSTTEQLQGLIESFIELGVLVHDNQGTQQSHTALTHKTNQVISQLSSLTDSGFTHQYPIPVDVISYIEDGRNPDVYTREFVEVTAKSNARLKGKMLGFQKLRDVLGDKLGKEFPELGSAIEDIKKRTTPDEE.

The protein belongs to the Mediator complex subunit 10 family. As to quaternary structure, component of the Mediator complex.

It is found in the nucleus. Functionally, component of the Mediator complex, a coactivator involved in the regulated transcription of nearly all RNA polymerase II-dependent genes. Mediator functions as a bridge to convey information from gene-specific regulatory proteins to the basal RNA polymerase II transcription machinery. Mediator is recruited to promoters by direct interactions with regulatory proteins and serves as a scaffold for the assembly of a functional preinitiation complex with RNA polymerase II and the general transcription factors. The polypeptide is Mediator of RNA polymerase II transcription subunit 10 (NUT2) (Debaryomyces hansenii (strain ATCC 36239 / CBS 767 / BCRC 21394 / JCM 1990 / NBRC 0083 / IGC 2968) (Yeast)).